A 153-amino-acid polypeptide reads, in one-letter code: Large ribosomal subunit protein uL15 (153 aa).

Residues 1–40 (MTDKKRRQRGSRTHGGGTHKNRRGAGNRGGRGRAGRKKHE) are compositionally biased toward basic residues. The interval 1–60 (MTDKKRRQRGSRTHGGGTHKNRRGAGNRGGRGRAGRKKHEQHNYEDVGKSGFKRPEKTDR) is disordered. A compositionally biased stretch (basic and acidic residues) spans 41-60 (QHNYEDVGKSGFKRPEKTDR).

The protein belongs to the universal ribosomal protein uL15 family. Part of the 50S ribosomal subunit.

Its function is as follows. Binds to the 23S rRNA. In Halobacterium salinarum (strain ATCC 29341 / DSM 671 / R1), this protein is Large ribosomal subunit protein uL15.